The primary structure comprises 130 residues: Cholecystokinin (130 aa).

Residues 1–20 form the signal peptide; sequence MYGGICICVLLAALSVSSLG. A propeptide spanning residues 21–48 is cleaved from the precursor; the sequence is QQPAGSHDGSPVAAELQQSLTEPHRHSR. A disordered region spans residues 21 to 63; the sequence is QQPAGSHDGSPVAAELQQSLTEPHRHSRAPSSAGPLKPAPRLD. At Tyr-112 the chain carries Sulfotyrosine. At Phe-118 the chain carries Phenylalanine amide. Residues 122–130 constitute a propeptide that is removed on maturation; the sequence is SAEEYEYSS. A sulfotyrosine mark is found at Tyr-126 and Tyr-128.

This sequence belongs to the gastrin/cholecystokinin family. Post-translationally, the precursor is cleaved by proteases to produce a number of active cholecystokinins. In terms of tissue distribution, in the small intestine, the major production site is around the vitelline diverticulum.

It is found in the secreted. Its function is as follows. This peptide hormone induces gall bladder contraction and the release of pancreatic enzymes in the gut. Its function in the brain is not clear. It also decreases food intake and regulates gastrointestinal physiological processes. The protein is Cholecystokinin (CCK) of Gallus gallus (Chicken).